A 294-amino-acid chain; its full sequence is GTPase Era (294 aa).

The region spanning 2–171 (NSGVVTIIGR…LSLLIELLPE (170 aa)) is the Era-type G domain. The G1 stretch occupies residues 10–17 (GRPSAGKS). 10–17 (GRPSAGKS) contacts GTP. A G2 region spans residues 36–40 (QTTRN). The G3 stretch occupies residues 57 to 60 (DTPG). GTP contacts are provided by residues 57–61 (DTPGY) and 119–122 (NKAD). A G4 region spans residues 119–122 (NKAD). The G5 stretch occupies residues 150–152 (ISA). One can recognise a KH type-2 domain in the interval 202–280 (TREEIPHALY…QLDLQVRVNK (79 aa)).

The protein belongs to the TRAFAC class TrmE-Era-EngA-EngB-Septin-like GTPase superfamily. Era GTPase family. As to quaternary structure, monomer.

It is found in the cytoplasm. The protein resides in the cell inner membrane. In terms of biological role, an essential GTPase that binds both GDP and GTP, with rapid nucleotide exchange. Plays a role in 16S rRNA processing and 30S ribosomal subunit biogenesis and possibly also in cell cycle regulation and energy metabolism. The polypeptide is GTPase Era (Treponema denticola (strain ATCC 35405 / DSM 14222 / CIP 103919 / JCM 8153 / KCTC 15104)).